The sequence spans 921 residues: Protein translocase subunit SecA (921 aa).

ATP is bound by residues Q86, 104 to 108, and D512; that span reads GEGKT. Zn(2+)-binding residues include C905, C907, C916, and H917.

It belongs to the SecA family. In terms of assembly, monomer and homodimer. Part of the essential Sec protein translocation apparatus which comprises SecA, SecYEG and auxiliary proteins SecDF-YajC and YidC. It depends on Zn(2+) as a cofactor.

It is found in the cell inner membrane. It localises to the cytoplasm. The enzyme catalyses ATP + H2O + cellular proteinSide 1 = ADP + phosphate + cellular proteinSide 2.. Functionally, part of the Sec protein translocase complex. Interacts with the SecYEG preprotein conducting channel. Has a central role in coupling the hydrolysis of ATP to the transfer of proteins into and across the cell membrane, serving both as a receptor for the preprotein-SecB complex and as an ATP-driven molecular motor driving the stepwise translocation of polypeptide chains across the membrane. The sequence is that of Protein translocase subunit SecA from Caulobacter sp. (strain K31).